The primary structure comprises 205 residues: uncharacterized protein (205 aa).

A run of 3 helical transmembrane segments spans residues 45–65, 119–139, and 144–164; these read LFFY…FLVI, VFWL…VTAF, and FEWM…LWGY.

It belongs to the TVP23 family.

The protein localises to the membrane. This is an uncharacterized protein from Caenorhabditis elegans.